The sequence spans 731 residues: Penicillin-binding protein 2a (731 aa).

The Cytoplasmic portion of the chain corresponds to Met-1–Lys-56. A helical; Signal-anchor for type II membrane protein transmembrane segment spans residues Ile-57–Ala-77. The tract at residues Lys-78–Ser-156 is hydrophobic; associated with cytoplasmic membrane. Required for transglycosylase activity, but not for lipid II binding. Residues Lys-78–Lys-300 are transglycosylase. The Extracellular portion of the chain corresponds to Lys-78–Arg-731. The active-site Proton donor; for transglycosylase activity is the Glu-131. The interval Ile-301–Arg-731 is transpeptidase. Ser-410 (acyl-ester intermediate; for transpeptidase activity) is an active-site residue. The interval Ala-674–Asp-694 is disordered. Residues Thr-676–Asp-690 are compositionally biased toward polar residues.

The protein in the N-terminal section; belongs to the glycosyltransferase 51 family. It in the C-terminal section; belongs to the transpeptidase family. Homodimer. May also form higher order oligomers. Self-association may depend on its transmembrane and/or cytoplasmic regions. Interacts with MacP; interaction is required for the function of this protein.

It localises to the cell membrane. Its subcellular location is the secreted. It is found in the cell wall. It carries out the reaction Preferential cleavage: (Ac)2-L-Lys-D-Ala-|-D-Ala. Also transpeptidation of peptidyl-alanyl moieties that are N-acyl substituents of D-alanine.. It catalyses the reaction [GlcNAc-(1-&gt;4)-Mur2Ac(oyl-L-Ala-gamma-D-Glu-L-Lys-D-Ala-D-Ala)](n)-di-trans,octa-cis-undecaprenyl diphosphate + beta-D-GlcNAc-(1-&gt;4)-Mur2Ac(oyl-L-Ala-gamma-D-Glu-L-Lys-D-Ala-D-Ala)-di-trans,octa-cis-undecaprenyl diphosphate = [GlcNAc-(1-&gt;4)-Mur2Ac(oyl-L-Ala-gamma-D-Glu-L-Lys-D-Ala-D-Ala)](n+1)-di-trans,octa-cis-undecaprenyl diphosphate + di-trans,octa-cis-undecaprenyl diphosphate + H(+). Its pathway is cell wall biogenesis; peptidoglycan biosynthesis. Functionally, cell wall formation. Synthesis of cross-linked peptidoglycan (PG) from the lipid intermediates. Binds dansylated lipid II and catalyzes the polymerization of glycan chains. Hydrolyzes S2d (N-benzoyl-D-alanylmercaptoacetic acid) molecule, a synthetic thiolester analog of cell wall stem peptide. Active against bocillin, a fluorescent penicillin. No transpeptidase activity with non-fluorescent lysine-containing lipid II as substrate. In Streptococcus pneumoniae serotype 2 (strain D39 / NCTC 7466), this protein is Penicillin-binding protein 2a.